The chain runs to 425 residues: MTPSDICPAIELPSSSRCMRIDYVGHPDAFSSCSNLCPTNLLRCIYSVRKYVLVRALSNFEDNTMFCTLRRSKDANKSYAIHMDDPPFARTKGRLSAIACVDCRASKTRCTGEPEGCKRCTFRKRPCQYPNLRRSNTTQHGEQIEASSSTFTMSDEQGSLGMEVSGQGSLDAQDINFANELTPVETAATMSDTMMSSECVTLNDSTITSSTIPFSIDSDIDLWNDVTGMAGSDTTSLWDYNAGSNDNIAAISTKEYVCACFAQALKTYESAEVHLVWSGRAHTADIMGLLQQQKNTISDCERLLDCVQCIEKSAFVVLLISICGKVLRSVEDASRELRPRDSVTEPTTKSKDPSQACLNIDANSISRHQLDDDDRLVVLGSLFLNRVTKLRSLIAAIEMLVMKRNWHIQRDMVRQLKSRVRLIDT.

The segment at residues 100-127 (CVDCRASKTRCTGEPEGCKRCTFRKRPC) is a DNA-binding region (zn(2)-C6 fungal-type). The disordered stretch occupies residues 132 to 159 (LRRSNTTQHGEQIEASSSTFTMSDEQGS). Polar residues predominate over residues 133–157 (RRSNTTQHGEQIEASSSTFTMSDEQ).

The protein resides in the nucleus. Functionally, transcription factor involved in regulation of gene cluster that mediates the biosynthesis of aphidicolin. The protein is Aspyridones cluster regulator (TF) of Neocamarosporium betae (Beet black rot fungus).